A 146-amino-acid chain; its full sequence is Probable actin-related protein 2/3 complex subunit 5 (146 aa).

It belongs to the ARPC5 family. As to quaternary structure, component of the Arp2/3 complex composed of ARP2, ARP3, ARPC1B/p41-ARC, ARPC2/p34-ARC, ARPC3/p21-ARC, ARPC4/p20-ARC and ARPC5/p16-ARC.

It is found in the cytoplasm. The protein localises to the cytoskeleton. Functions as a component of the Arp2/3 complex which is involved in regulation of actin polymerization and together with an activating nucleation-promoting factor (NPF) mediates the formation of branched actin networks. The sequence is that of Probable actin-related protein 2/3 complex subunit 5 from Caenorhabditis elegans.